The chain runs to 342 residues: uncharacterized protein (342 aa).

One can recognise a MurNAc-LAA domain in the interval 3–173 (IAIRGGHNFL…LIGYLIAKGI (171 aa)).

This sequence to C.perfringens CPE1502.

This is an uncharacterized protein from Clostridium perfringens.